A 113-amino-acid polypeptide reads, in one-letter code: Cell cycle protein GpsB (113 aa).

Residues 32–71 (LDNVIKDYESFTKDNQQLSDENERLRAKVDELTKQVAVGA) are a coiled coil.

The protein belongs to the GpsB family. In terms of assembly, forms polymers through the coiled coil domains. Interacts with PBP1, MreC and EzrA.

It localises to the cytoplasm. Its function is as follows. Divisome component that associates with the complex late in its assembly, after the Z-ring is formed, and is dependent on DivIC and PBP2B for its recruitment to the divisome. Together with EzrA, is a key component of the system that regulates PBP1 localization during cell cycle progression. Its main role could be the removal of PBP1 from the cell pole after pole maturation is completed. Also contributes to the recruitment of PBP1 to the division complex. Not essential for septum formation. This is Cell cycle protein GpsB from Lactiplantibacillus plantarum (strain ATCC BAA-793 / NCIMB 8826 / WCFS1) (Lactobacillus plantarum).